The following is a 227-amino-acid chain: uncharacterized protein (227 aa).

The next 7 membrane-spanning stretches (helical) occupy residues 25–45 (LLGF…NAGF), 49–69 (AAFG…YGMI), 80–100 (TGVT…GPVL), 111–131 (KIVG…SALA), 144–164 (FLTV…FLGI), 165–185 (PALA…MIMW), and 201–221 (AALT…NILL).

It is found in the cell membrane. This is an uncharacterized protein from Neisseria meningitidis serogroup B (strain ATCC BAA-335 / MC58).